A 170-amino-acid polypeptide reads, in one-letter code: Photosystem I assembly protein Ycf3 (170 aa).

3 TPR repeats span residues 35–68 (AFTYYRDGMLAQSEGNYAEALQNYYEATRLEIDP), 72–105 (SYILYNIGLIHTSNGEHTKALEYYFRALERNPFL), and 120–153 (GEQAILQGDSEIAEAWFDQAAEYWKQAIALTPGN).

It belongs to the Ycf3 family.

Its subcellular location is the plastid. It is found in the chloroplast thylakoid membrane. Its function is as follows. Essential for the assembly of the photosystem I (PSI) complex. May act as a chaperone-like factor to guide the assembly of the PSI subunits. The sequence is that of Photosystem I assembly protein Ycf3 from Agrostis stolonifera (Creeping bentgrass).